A 340-amino-acid polypeptide reads, in one-letter code: Uroporphyrinogen decarboxylase (340 aa).

Substrate-binding positions include 21 to 25 (RQAGR), Asp-71, Tyr-148, Ser-203, and His-316.

This sequence belongs to the uroporphyrinogen decarboxylase family. As to quaternary structure, homodimer.

It localises to the cytoplasm. It carries out the reaction uroporphyrinogen III + 4 H(+) = coproporphyrinogen III + 4 CO2. Its pathway is porphyrin-containing compound metabolism; protoporphyrin-IX biosynthesis; coproporphyrinogen-III from 5-aminolevulinate: step 4/4. Catalyzes the decarboxylation of four acetate groups of uroporphyrinogen-III to yield coproporphyrinogen-III. The protein is Uroporphyrinogen decarboxylase of Campylobacter hominis (strain ATCC BAA-381 / DSM 21671 / CCUG 45161 / LMG 19568 / NCTC 13146 / CH001A).